Consider the following 1545-residue polypeptide: Pentafunctional AROM polypeptide (1545 aa).

A 3-dehydroquinate synthase region spans residues 1-383 (MSGLIEKVSI…YEPKASYVND (383 aa)). NAD(+) is bound by residues 44–46 (DSN), 82–85 (EANK), 113–115 (GGV), and Asp118. Arg129 serves as a coordination point for 7-phospho-2-dehydro-3-deoxy-D-arabino-heptonate. 138-139 (TS) serves as a coordination point for NAD(+). 7-phospho-2-dehydro-3-deoxy-D-arabino-heptonate is bound by residues Asp145 and Lys151. Lys160 serves as a coordination point for NAD(+). Asn161 is a binding site for 7-phospho-2-dehydro-3-deoxy-D-arabino-heptonate. Residues 178 to 181 (FLET) and Asn189 contribute to the NAD(+) site. Position 193 (Glu193) interacts with Zn(2+). 7-phospho-2-dehydro-3-deoxy-D-arabino-heptonate-binding positions include 193–196 (EVVK) and Lys249. The active-site Proton acceptor; for 3-dehydroquinate synthase activity is the Glu259. Residues 263–267 (RNLLN) and His270 each bind 7-phospho-2-dehydro-3-deoxy-D-arabino-heptonate. His270 contacts Zn(2+). The active-site Proton acceptor; for 3-dehydroquinate synthase activity is His274. Residues His286 and Lys355 each contribute to the 7-phospho-2-dehydro-3-deoxy-D-arabino-heptonate site. His286 is a binding site for Zn(2+). The tract at residues 396 to 840 (VKDFNSAPST…WDILHTTFNV (445 aa)) is EPSP synthase. Catalysis depends on Cys822, which acts as the For EPSP synthase activity. The shikimate kinase stretch occupies residues 859 to 1049 (DKSIIVIGMR…IPNGRSAFVC (191 aa)). 866-873 (GMRAAGKS) is an ATP binding site. A 3-dehydroquinase region spans residues 1050–1261 (LTYEDLAPVS…AAPGQLTLKE (212 aa)). His1166 acts as the Proton acceptor; for 3-dehydroquinate dehydratase activity in catalysis. Lys1195 acts as the Schiff-base intermediate with substrate; for 3-dehydroquinate dehydratase activity in catalysis. Residues 1274-1545 (RKKFYIVGKP…GYQFSSHIDL (272 aa)) form a shikimate dehydrogenase region.

This sequence in the N-terminal section; belongs to the sugar phosphate cyclases superfamily. Dehydroquinate synthase family. It in the 2nd section; belongs to the EPSP synthase family. The protein in the 3rd section; belongs to the shikimate kinase family. In the 4th section; belongs to the type-I 3-dehydroquinase family. This sequence in the C-terminal section; belongs to the shikimate dehydrogenase family. As to quaternary structure, homodimer. The cofactor is Zn(2+).

The protein resides in the cytoplasm. The enzyme catalyses 7-phospho-2-dehydro-3-deoxy-D-arabino-heptonate = 3-dehydroquinate + phosphate. It carries out the reaction 3-dehydroquinate = 3-dehydroshikimate + H2O. The catalysed reaction is shikimate + NADP(+) = 3-dehydroshikimate + NADPH + H(+). It catalyses the reaction shikimate + ATP = 3-phosphoshikimate + ADP + H(+). The enzyme catalyses 3-phosphoshikimate + phosphoenolpyruvate = 5-O-(1-carboxyvinyl)-3-phosphoshikimate + phosphate. Its pathway is metabolic intermediate biosynthesis; chorismate biosynthesis; chorismate from D-erythrose 4-phosphate and phosphoenolpyruvate: step 2/7. It functions in the pathway metabolic intermediate biosynthesis; chorismate biosynthesis; chorismate from D-erythrose 4-phosphate and phosphoenolpyruvate: step 3/7. It participates in metabolic intermediate biosynthesis; chorismate biosynthesis; chorismate from D-erythrose 4-phosphate and phosphoenolpyruvate: step 4/7. The protein operates within metabolic intermediate biosynthesis; chorismate biosynthesis; chorismate from D-erythrose 4-phosphate and phosphoenolpyruvate: step 5/7. Its pathway is metabolic intermediate biosynthesis; chorismate biosynthesis; chorismate from D-erythrose 4-phosphate and phosphoenolpyruvate: step 6/7. Its function is as follows. The AROM polypeptide catalyzes 5 consecutive enzymatic reactions in prechorismate polyaromatic amino acid biosynthesis. The polypeptide is Pentafunctional AROM polypeptide (Komagataella phaffii (strain GS115 / ATCC 20864) (Yeast)).